We begin with the raw amino-acid sequence, 342 residues long: S-methyl-5'-thioadenosine phosphorylase (342 aa).

Phosphate-binding positions include Thr-51, 99-100 (RH), and 132-133 (SA). Met-234 is a substrate binding site. Ser-235 serves as a coordination point for phosphate. Position 258–260 (258–260 (DYD)) interacts with substrate.

Belongs to the PNP/MTAP phosphorylase family. MTAP subfamily. Homotrimer.

The protein localises to the cytoplasm. It localises to the nucleus. The enzyme catalyses S-methyl-5'-thioadenosine + phosphate = 5-(methylsulfanyl)-alpha-D-ribose 1-phosphate + adenine. It participates in amino-acid biosynthesis; L-methionine biosynthesis via salvage pathway; S-methyl-5-thio-alpha-D-ribose 1-phosphate from S-methyl-5'-thioadenosine (phosphorylase route): step 1/1. In terms of biological role, catalyzes the reversible phosphorylation of S-methyl-5'-thioadenosine (MTA) to adenine and 5-methylthioribose-1-phosphate. Involved in the breakdown of MTA, a major by-product of polyamine biosynthesis. Responsible for the first step in the methionine salvage pathway after MTA has been generated from S-adenosylmethionine. Has broad substrate specificity with 6-aminopurine nucleosides as preferred substrates. The polypeptide is S-methyl-5'-thioadenosine phosphorylase (Aspergillus fumigatus (strain ATCC MYA-4609 / CBS 101355 / FGSC A1100 / Af293) (Neosartorya fumigata)).